The sequence spans 272 residues: Phytolongin Phyl2.2 (272 aa).

The Longin domain occupies 12-116; it reads CIAKGTVVLA…LINPVSHCLQ (105 aa). The helical; Anchor for type IV membrane protein transmembrane segment at 243–263 threads the bilayer; it reads WVVLMFDFCICAVLFGIWLWI.

This sequence belongs to the synaptobrevin family.

It localises to the membrane. Its function is as follows. Non-SNARE longin protein involved in membrane-trafficking machinery. The protein is Phytolongin Phyl2.2 of Arabidopsis thaliana (Mouse-ear cress).